The chain runs to 384 residues: Adaptive-response sensory kinase SasA (384 aa).

One can recognise a Histidine kinase domain in the interval 162–384 (MLAHDLRSPL…SFHFTLPVYR (223 aa)). H165 carries the phosphohistidine; by autocatalysis modification.

Homooligomerizes. Interacts with KaiC. Participates in the KaiABC clock complex, whose core is composed of a KaiC homohexamer, 6 KaiB and up to 6 KaiA dimers. SasA and KaiB(fs) compete to bind to KaiC.

It catalyses the reaction ATP + protein L-histidine = ADP + protein N-phospho-L-histidine.. Member of the two-component regulatory system SasA/RpaA involved in genome-wide circadian gene expression. One of several clock output pathways. Participates in the Kai clock protein complex, the main circadian regulator in cyanobacteria, via its interaction with KaiC. KaiC enhances the autophosphorylation activity of SasA, which then transfers its phosphate group to RpaA to activate it. In addition to its output function, recruits fold-shifted KaiB (KaiB(fs)) to KaiC to cooperatively form the KaiB(6):KaiC(6) complex (independent of SasA kinase activity). Required for robustness of the circadian rhythm of gene expression and is involved in clock output, also required for adaptation to light/dark cycles. This chain is Adaptive-response sensory kinase SasA, found in Microcystis aeruginosa (strain NIES-843 / IAM M-2473).